A 441-amino-acid chain; its full sequence is Proline--tRNA ligase (441 aa).

The protein belongs to the class-II aminoacyl-tRNA synthetase family. ProS type 2 subfamily. As to quaternary structure, homodimer.

The protein resides in the cytoplasm. The enzyme catalyses tRNA(Pro) + L-proline + ATP = L-prolyl-tRNA(Pro) + AMP + diphosphate. In terms of biological role, catalyzes the attachment of proline to tRNA(Pro) in a two-step reaction: proline is first activated by ATP to form Pro-AMP and then transferred to the acceptor end of tRNA(Pro). The chain is Proline--tRNA ligase from Methylorubrum populi (strain ATCC BAA-705 / NCIMB 13946 / BJ001) (Methylobacterium populi).